Consider the following 292-residue polypeptide: Acetyl-coenzyme A carboxylase carboxyl transferase subunit beta (292 aa).

The CoA carboxyltransferase N-terminal domain maps to 23 to 292 (VWSKCTACGN…TEATEVSVNE (270 aa)). Cys-27, Cys-30, Cys-46, and Cys-49 together coordinate Zn(2+). The C4-type zinc finger occupies 27–49 (CTACGNIIYKADLERSLNVCPKC).

Belongs to the AccD/PCCB family. As to quaternary structure, acetyl-CoA carboxylase is a heterohexamer composed of biotin carboxyl carrier protein (AccB), biotin carboxylase (AccC) and two subunits each of ACCase subunit alpha (AccA) and ACCase subunit beta (AccD). Zn(2+) is required as a cofactor.

The protein localises to the cytoplasm. The catalysed reaction is N(6)-carboxybiotinyl-L-lysyl-[protein] + acetyl-CoA = N(6)-biotinyl-L-lysyl-[protein] + malonyl-CoA. It functions in the pathway lipid metabolism; malonyl-CoA biosynthesis; malonyl-CoA from acetyl-CoA: step 1/1. Its function is as follows. Component of the acetyl coenzyme A carboxylase (ACC) complex. Biotin carboxylase (BC) catalyzes the carboxylation of biotin on its carrier protein (BCCP) and then the CO(2) group is transferred by the transcarboxylase to acetyl-CoA to form malonyl-CoA. The sequence is that of Acetyl-coenzyme A carboxylase carboxyl transferase subunit beta from Idiomarina loihiensis (strain ATCC BAA-735 / DSM 15497 / L2-TR).